The chain runs to 274 residues: Carbonic anhydrase (274 aa).

Zn(2+)-binding residues include C39, H98, and C101. The interval 214-274 is disordered; it reads EDEYAPHPNS…QAERIYRGSR (61 aa). Basic and acidic residues-rich tracts occupy residues 234–245 and 261–274; these read PGKERPGREKAT and LPRE…RGSR.

This sequence belongs to the beta-class carbonic anhydrase family. In terms of assembly, a hexamer formed by a trimer of dimers. Interacts with the first 260 residues of CcmM; both the N-terminal 206 residues and the C-terminal tail contribute to CcmM binding. Interacts with full-length and the N-terminal 249 residues of CcmM. A probable CcmM-CcaA-CcmN complex as well as a CcaA-RuBisCO-CcmM complex can also be isolated. Zn(2+) serves as cofactor.

It is found in the carboxysome. It catalyses the reaction hydrogencarbonate + H(+) = CO2 + H2O. With respect to regulation, inhibited by ethoxyzolamide. Reversible hydration of carbon dioxide. Essential to photosynthetic carbon dioxide fixation, supplies CO(2) to RuBisCO (ribulose bisphosphate carboxylase, rbcL-rbcS) in the carboxysome. The protein is Carbonic anhydrase of Synechocystis sp. (strain ATCC 27184 / PCC 6803 / Kazusa).